Consider the following 460-residue polypeptide: V-type ATP synthase beta chain (460 aa).

Belongs to the ATPase alpha/beta chains family.

Functionally, produces ATP from ADP in the presence of a proton gradient across the membrane. The V-type beta chain is a regulatory subunit. The chain is V-type ATP synthase beta chain from Anaeromyxobacter sp. (strain Fw109-5).